The sequence spans 1284 residues: Neuronal cell adhesion molecule (1284 aa).

Residues 1-24 form the signal peptide; it reads MMKEKSISASKASLVFFLCQMISA. At 25-1143 the chain is on the extracellular side; the sequence is LDVPLDSKLL…ASRQVDIATQ (1119 aa). 6 Ig-like C2-type domains span residues 41 to 129, 136 to 230, 243 to 332, 337 to 424, 430 to 517, and 521 to 608; these read PTIT…AAIS, PSRS…QPIS, PPVL…ISVT, PYWI…AFVN, PRIL…VQLE, and PTMI…AVLT. 2 disulfide bridges follow: cysteine 63–cysteine 118 and cysteine 162–cysteine 213. Asparagine 78 is a glycosylation site (N-linked (GlcNAc...) asparagine). N-linked (GlcNAc...) asparagine glycans are attached at residues asparagine 218 and asparagine 290. 2 cysteine pairs are disulfide-bonded: cysteine 268–cysteine 316 and cysteine 358–cysteine 408. Asparagine 409, asparagine 483, asparagine 576, asparagine 581, asparagine 595, and asparagine 692 each carry an N-linked (GlcNAc...) asparagine glycan. Intrachain disulfides connect cysteine 452/cysteine 501 and cysteine 543/cysteine 592. 5 consecutive Fibronectin type-III domains span residues 625–720, 725–819, 824–926, 930–1026, and 1040–1132; these read PPLD…TKSA, NPSN…SGED, APGN…TPEG, PPSF…IMDE, and QPLY…TGPA. Residues 707 to 731 show a composition bias toward polar residues; that stretch reads QPSEPSEQYLTKSANPDENPSNVQG. Positions 707–732 are disordered; that stretch reads QPSEPSEQYLTKSANPDENPSNVQGI. N-linked (GlcNAc...) asparagine glycans are attached at residues asparagine 778, asparagine 834, asparagine 885, asparagine 969, asparagine 985, asparagine 995, asparagine 1048, asparagine 1059, and asparagine 1091. Residues 1144–1166 traverse the membrane as a helical segment; that stretch reads GWFIGLMCAVALLILILLIVCFI. Over 1167–1284 the chain is Cytoplasmic; it reads RRNKGGKYPV…SPVNAMNSFV (118 aa). Basic and acidic residues-rich tracts occupy residues 1175-1195, 1202-1212, and 1221-1230; these read PVKE…KEDD, RSLESDAEDHK, and PSDRTVKKED. A disordered region spans residues 1175 to 1284; it reads PVKEKEDAHA…SPVNAMNSFV (110 aa). Residues 1268 to 1284 show a composition bias toward polar residues; sequence NESSEAPSPVNAMNSFV.

Belongs to the immunoglobulin superfamily. L1/neurofascin/NgCAM family. As to quaternary structure, heterodimer of an alpha and a beta chain. Retina and developing brain.

The protein localises to the cell membrane. Functionally, this protein is a cell adhesion molecule involved in neuron-neuron adhesion, neurite fasciculation, outgrowth of neurites, etc. Specifically involved in the development of optic fibres in the retina. This Gallus gallus (Chicken) protein is Neuronal cell adhesion molecule.